We begin with the raw amino-acid sequence, 439 residues long: Niacin transporter NiaP (439 aa).

12 helical membrane-spanning segments follow: residues 20–40 (LWVV…IAFI), 57–77 (WIVS…GGLA), 84–104 (TVFA…AFAP), 108–128 (WLLA…PVAV), 143–163 (FIVL…LVSY), 169–189 (FGWH…YVII), 253–273 (LMLW…FTWL), 288–308 (FEYV…AAWL), 316–336 (ATLA…GQAD), 338–358 (VFNI…AWGV), 374–394 (FGAG…PIVV), and 407–427 (VFMM…ILGE).

The protein belongs to the major facilitator superfamily. Sugar transporter (TC 2.A.1.1) family.

The protein localises to the cell inner membrane. In terms of biological role, functions as a high-affinity transporter of niacin (nicotinamide or nicotinate). Probably substantially contributes to niacin transport when its concentration in the medium is very low. This is Niacin transporter NiaP from Acinetobacter baylyi (strain ATCC 33305 / BD413 / ADP1).